A 398-amino-acid chain; its full sequence is MESSSPHHSHIVEVNVGKSDEERIIVASKVCGEAPCGFSDSKNASGDAHERSASMRKLCIAVVLCLVFMSVEVVGGIKANSLAILTDAAHLLSDVAAFAISLFSLWAAGWEATPRQTYGFFRIEILGALVSIQLIWLLTGILVYEAIIRIVTETSEVNGFLMFLVAAFGLVVNIIMAVLLGHDHGHSHGHGHGHGHDHHNHSHGVTVTTHHHHHDHEHGHSHGHGEDKHHAHGDVTEQLLDKSKTQVAAKEKRKRNINLQGAYLHVLGDSIQSVGVMIGGAIIWYNPEWKIVDLICTLAFSVIVLGTTINMIRNILEVLMESTPREIDATKLEKGLLEMEEVVAVHELHIWAITVGKVLLACHVNIRPEADADMVLNKVIDYIRREYNISHVTIQIER.

The Cytoplasmic portion of the chain corresponds to 1–56 (MESSSPHHSHIVEVNVGKSDEERIIVASKVCGEAPCGFSDSKNASGDAHERSASMR). The helical transmembrane segment at 57–77 (KLCIAVVLCLVFMSVEVVGGI) threads the bilayer. At 78–89 (KANSLAILTDAA) the chain is on the vacuolar side. The chain crosses the membrane as a helical span at residues 90–110 (HLLSDVAAFAISLFSLWAAGW). Residues 111–122 (EATPRQTYGFFR) are Cytoplasmic-facing. The helical transmembrane segment at 123–143 (IEILGALVSIQLIWLLTGILV) threads the bilayer. The Vacuolar portion of the chain corresponds to 144–159 (YEAIIRIVTETSEVNG). A helical transmembrane segment spans residues 160 to 180 (FLMFLVAAFGLVVNIIMAVLL). The Cytoplasmic segment spans residues 181–263 (GHDHGHSHGH…KRNINLQGAY (83 aa)). The tract at residues 182-232 (HDHGHSHGHGHGHGHDHHNHSHGVTVTTHHHHHDHEHGHSHGHGEDKHHAH) is required for zinc-binding. The interval 186–232 (HSHGHGHGHGHDHHNHSHGVTVTTHHHHHDHEHGHSHGHGEDKHHAH) is disordered. Basic residues predominate over residues 187 to 202 (SHGHGHGHGHDHHNHS). Positions 216-232 (HEHGHSHGHGEDKHHAH) are enriched in basic and acidic residues. The chain crosses the membrane as a helical span at residues 264–284 (LHVLGDSIQSVGVMIGGAIIW). Residues 285–290 (YNPEWK) lie on the Vacuolar side of the membrane. The helical transmembrane segment at 291–311 (IVDLICTLAFSVIVLGTTINM) threads the bilayer. Over 312 to 398 (IRNILEVLME…ISHVTIQIER (87 aa)) the chain is Cytoplasmic.

The protein belongs to the cation diffusion facilitator (CDF) transporter (TC 2.A.4) family. SLC30A subfamily. As to expression, ubiquitously expressed at low levels.

It localises to the vacuole membrane. In terms of biological role, mediates zinc accumulation in roots and confers resistance to zinc. Involved in sequestration of excess zinc in the cytoplasm into vacuoles to maintain zinc homeostasis. Can also transport cadmium with a low efficiency. This is Metal tolerance protein 1 from Arabidopsis thaliana (Mouse-ear cress).